The primary structure comprises 337 residues: Holliday junction branch migration complex subunit RuvB (337 aa).

Residues 1–181 form a large ATPase domain (RuvB-L) region; that stretch reads MQRLVEIERF…FGMNFRMQFY (181 aa). ATP is bound by residues L20, R21, G62, K65, T66, T67, 128–130, R171, Y181, and R218; that span reads EDF. T66 provides a ligand contact to Mg(2+). Residues 182–252 form a small ATPAse domain (RuvB-S) region; that stretch reads SPEELSKIIS…RAQYALDELG (71 aa). A head domain (RuvB-H) region spans residues 255–337; it reads SYGFDEMDIK…MPALDDGGLF (83 aa). Residues R309 and R314 each contribute to the DNA site.

Belongs to the RuvB family. Homohexamer. Forms an RuvA(8)-RuvB(12)-Holliday junction (HJ) complex. HJ DNA is sandwiched between 2 RuvA tetramers; dsDNA enters through RuvA and exits via RuvB. An RuvB hexamer assembles on each DNA strand where it exits the tetramer. Each RuvB hexamer is contacted by two RuvA subunits (via domain III) on 2 adjacent RuvB subunits; this complex drives branch migration. In the full resolvosome a probable DNA-RuvA(4)-RuvB(12)-RuvC(2) complex forms which resolves the HJ.

It is found in the cytoplasm. The catalysed reaction is ATP + H2O = ADP + phosphate + H(+). The RuvA-RuvB-RuvC complex processes Holliday junction (HJ) DNA during genetic recombination and DNA repair, while the RuvA-RuvB complex plays an important role in the rescue of blocked DNA replication forks via replication fork reversal (RFR). RuvA specifically binds to HJ cruciform DNA, conferring on it an open structure. The RuvB hexamer acts as an ATP-dependent pump, pulling dsDNA into and through the RuvAB complex. RuvB forms 2 homohexamers on either side of HJ DNA bound by 1 or 2 RuvA tetramers; 4 subunits per hexamer contact DNA at a time. Coordinated motions by a converter formed by DNA-disengaged RuvB subunits stimulates ATP hydrolysis and nucleotide exchange. Immobilization of the converter enables RuvB to convert the ATP-contained energy into a lever motion, pulling 2 nucleotides of DNA out of the RuvA tetramer per ATP hydrolyzed, thus driving DNA branch migration. The RuvB motors rotate together with the DNA substrate, which together with the progressing nucleotide cycle form the mechanistic basis for DNA recombination by continuous HJ branch migration. Branch migration allows RuvC to scan DNA until it finds its consensus sequence, where it cleaves and resolves cruciform DNA. This is Holliday junction branch migration complex subunit RuvB from Sulfurimonas denitrificans (strain ATCC 33889 / DSM 1251) (Thiomicrospira denitrificans (strain ATCC 33889 / DSM 1251)).